We begin with the raw amino-acid sequence, 153 residues long: Bacteriohemerythrin (153 aa).

Fe cation-binding residues include H21, H57, E61, H76, H80, H115, and D120.

Belongs to the hemerythrin family. Monomer.

Its function is as follows. Oxygen-binding protein. May be involved in a storage mechanism or for delivery to oxygen-requiring enzymes. The oxygen-binding site contains two iron atoms. The polypeptide is Bacteriohemerythrin (Pseudomonas aeruginosa (strain UCBPP-PA14)).